A 391-amino-acid chain; its full sequence is Chorismate synthase (391 aa).

Arg48 is an NADP(+) binding site. FMN contacts are provided by residues 126–128 (RSS), Gly287, 302–306 (KPTSS), and Arg329.

This sequence belongs to the chorismate synthase family. Requires FMNH2 as cofactor.

The catalysed reaction is 5-O-(1-carboxyvinyl)-3-phosphoshikimate = chorismate + phosphate. The protein operates within metabolic intermediate biosynthesis; chorismate biosynthesis; chorismate from D-erythrose 4-phosphate and phosphoenolpyruvate: step 7/7. Catalyzes the anti-1,4-elimination of the C-3 phosphate and the C-6 proR hydrogen from 5-enolpyruvylshikimate-3-phosphate (EPSP) to yield chorismate, which is the branch point compound that serves as the starting substrate for the three terminal pathways of aromatic amino acid biosynthesis. This reaction introduces a second double bond into the aromatic ring system. This is Chorismate synthase from Sulfolobus acidocaldarius (strain ATCC 33909 / DSM 639 / JCM 8929 / NBRC 15157 / NCIMB 11770).